A 716-amino-acid chain; its full sequence is Probable calcium-binding mitochondrial carrier K02F3.2 (716 aa).

The interval 1–345 (MSFDHLLTSS…CLKDIQAIDP (345 aa)) is N-terminal domain. EF-hand domains are found at residues 93–121 (YNKE…FCAF), 127–162 (SPDA…TQPL), 165–195 (QDFD…CQLL), and 198–233 (FYEE…VKGH). Asp106, Thr108, Asp110, Glu117, Asp140, Asn142, Ser144, Thr146, and Glu151 together coordinate Ca(2+). Residues Asp211, Asn213, Asn215, Thr217, and Asp222 each coordinate Ca(2+). The linker loop domain stretch occupies residues 346–362 (ERLKRVSQMDRLINIKA). Positions 372–664 (GTAFLESAYR…RLFYVDFAGS (293 aa)) are carrier domain. Solcar repeat units follow at residues 376 to 468 (LESA…MRDK), 475 to 560 (IPLY…AKLA), and 568 to 656 (NSPG…LQRL). The next 6 helical transmembrane spans lie at 382-399 (FLLG…VYPI), 443-462 (GLLP…LTMN), 485-498 (GTGG…TNPL), 535-554 (GSRA…FPAY), 574-591 (FASA…VTPA), and 631-650 (GTAA…LLTY). The segment at 665–716 (RPTGSELATTKTIQDESSTNPDHVGGYKLAAATFSGIEHKFGLFLPKFETSK) is C-terminal domain.

The protein belongs to the mitochondrial carrier (TC 2.A.29) family. As to quaternary structure, homodimer (via N-terminus).

The protein localises to the mitochondrion inner membrane. In terms of biological role, mitochondrial and calcium-binding carrier that catalyzes the calcium-dependent exchange of cytoplasmic glutamate with mitochondrial aspartate across the mitochondrial inner membrane. This chain is Probable calcium-binding mitochondrial carrier K02F3.2, found in Caenorhabditis elegans.